Reading from the N-terminus, the 379-residue chain is UDP-4-amino-4-deoxy-L-arabinose--oxoglutarate aminotransferase (379 aa).

Position 182 is an N6-(pyridoxal phosphate)lysine (Lys182).

This sequence belongs to the DegT/DnrJ/EryC1 family. ArnB subfamily. Homodimer. The cofactor is pyridoxal 5'-phosphate.

It carries out the reaction UDP-4-amino-4-deoxy-beta-L-arabinose + 2-oxoglutarate = UDP-beta-L-threo-pentopyranos-4-ulose + L-glutamate. Its pathway is nucleotide-sugar biosynthesis; UDP-4-deoxy-4-formamido-beta-L-arabinose biosynthesis; UDP-4-deoxy-4-formamido-beta-L-arabinose from UDP-alpha-D-glucuronate: step 2/3. It functions in the pathway bacterial outer membrane biogenesis; lipopolysaccharide biosynthesis. Its function is as follows. Catalyzes the conversion of UDP-4-keto-arabinose (UDP-Ara4O) to UDP-4-amino-4-deoxy-L-arabinose (UDP-L-Ara4N). The modified arabinose is attached to lipid A and is required for resistance to polymyxin and cationic antimicrobial peptides. The protein is UDP-4-amino-4-deoxy-L-arabinose--oxoglutarate aminotransferase of Klebsiella pneumoniae subsp. pneumoniae (strain ATCC 700721 / MGH 78578).